Consider the following 938-residue polypeptide: Leucine--tRNA ligase 1 (938 aa).

The 'HIGH' region signature appears at 40 to 50 (PYTNSPLHIGH). The short motif at 620-624 (KMSKS) is the 'KMSKS' region element. K623 contacts ATP.

Belongs to the class-I aminoacyl-tRNA synthetase family.

The protein resides in the cytoplasm. The enzyme catalyses tRNA(Leu) + L-leucine + ATP = L-leucyl-tRNA(Leu) + AMP + diphosphate. This is Leucine--tRNA ligase 1 from Metallosphaera sedula (strain ATCC 51363 / DSM 5348 / JCM 9185 / NBRC 15509 / TH2).